Reading from the N-terminus, the 199-residue chain is Golgi to ER traffic protein 1 (199 aa).

Over 1 to 11 (MLLPDLHPYTI) the chain is Lumenal. A helical transmembrane segment spans residues 12–31 (LLSIFLVLVAKQLVATIGKS). Residues 32-115 (TIQEFVWLVY…SIDKASNALI (84 aa)) lie on the Cytoplasmic side of the membrane. Positions 76 to 116 (YAKWTKLNRQADKLSAELQKLNQEIQQQKSSIDKASNALIL) form a coiled coil. The helical transmembrane segment at 116-136 (LVLTTLPIWIARVFYRKTHLF) threads the bilayer. Topologically, residues 137-160 (YIRQGIFPKYVEWVLALPFLPNGA) are lumenal. The helical transmembrane segment at 161-177 (VGLTIWMFAVNSVVSNF) threads the bilayer. Residues 178–199 (SFLVSFPFAKRVSKPVRDTKVE) lie on the Cytoplasmic side of the membrane.

Belongs to the WRB/GET1 family. In terms of assembly, component of the Golgi to ER traffic (GET) complex, which is composed of GET1, GET2 and GET3. Within the complex, GET1 and GET2 form a heterotetramer which is stabilized by phosphatidylinositol binding and which binds to the GET3 homodimer.

The protein resides in the endoplasmic reticulum membrane. The protein localises to the golgi apparatus membrane. Its function is as follows. Required for the post-translational delivery of tail-anchored (TA) proteins to the endoplasmic reticulum. Together with GET2, acts as a membrane receptor for soluble GET3, which recognizes and selectively binds the transmembrane domain of TA proteins in the cytosol. The GET complex cooperates with the HDEL receptor ERD2 to mediate the ATP-dependent retrieval of resident ER proteins that contain a C-terminal H-D-E-L retention signal from the Golgi to the ER. This is Golgi to ER traffic protein 1 from Candida albicans (strain SC5314 / ATCC MYA-2876) (Yeast).